Reading from the N-terminus, the 82-residue chain is Host transcription reprogramming factor 10 (82 aa).

The first 19 residues, 1 to 19 (MQIFNMVSLVALFALGATA), serve as a signal peptide directing secretion. The segment at 57–81 (WVCHACNKQFTTPAALQKHKDTVVH) adopts a C2H2-type zinc-finger fold.

The protein localises to the secreted. It is found in the host nucleus. In terms of biological role, probable secreted effector that translocates into the nuclei of host cells to reprogram the expression of targeted genes by binding on effector binding elements in rice. The polypeptide is Host transcription reprogramming factor 10 (Pyricularia oryzae (strain 70-15 / ATCC MYA-4617 / FGSC 8958) (Rice blast fungus)).